The following is a 285-amino-acid chain: Pyrroline-5-carboxylate reductase (285 aa).

The protein belongs to the pyrroline-5-carboxylate reductase family. In terms of assembly, homotetramer.

The catalysed reaction is L-proline + NADP(+) = (S)-1-pyrroline-5-carboxylate + NADPH + 2 H(+). It catalyses the reaction L-proline + NAD(+) = (S)-1-pyrroline-5-carboxylate + NADH + 2 H(+). Its pathway is amino-acid biosynthesis; L-proline biosynthesis; L-proline from L-glutamate 5-semialdehyde: step 1/1. This chain is Pyrroline-5-carboxylate reductase, found in Kluyveromyces lactis (strain ATCC 8585 / CBS 2359 / DSM 70799 / NBRC 1267 / NRRL Y-1140 / WM37) (Yeast).